We begin with the raw amino-acid sequence, 505 residues long: Surface lipoprotein assembly modifier 2 (505 aa).

The N-terminal stretch at 1–19 is a signal peptide; sequence MLYFRYGFLVVWCAAGVSA. The tract at residues 23–188 is N-terminal domain; it reads ADAPAILDDK…RFRKKTEGLT (166 aa). The segment at 189 to 505 is C-terminal probable beta barrel; that stretch reads GWRFSGGISP…EVFVSADWRF (317 aa). 14 beta stranded membrane-spanning segments follow: residues 190–200, 232–243, 248–258, 273–283, 287–297, 326–335, 340–350, 368–377, 381–391, 411–420, 427–437, 456–465, 472–482, and 495–505; these read WRFSGGISPAV, LNYEIEAEKLTP, HYLLFRSNIGG, FGRAYLGWQYK, QTAGILPFYQV, VGVQLSHTYR, WQFSVALEHYR, GFYVSSAKRL, ATVFGGWQFVR, NGVYAGWAQE, LNSRVSASYAR, WNVSLALSHD, IVPALNYRFGR, and SEVFVSADWRF.

The protein belongs to the Slam family.

It is found in the cell outer membrane. Its function is as follows. Required for correct export to the cell surface of cell outer membrane lipoprotein HpuA heterologously in E.coli (hpuA does not exist in N.meningitidis strain MC58). The chain is Surface lipoprotein assembly modifier 2 from Neisseria meningitidis serogroup B (strain ATCC BAA-335 / MC58).